The following is a 208-amino-acid chain: Uracil phosphoribosyltransferase (208 aa).

Residues Arg78, Arg103, and 130–138 (DPMLATGGS) contribute to the 5-phospho-alpha-D-ribose 1-diphosphate site. Uracil is bound by residues Ile193 and 198–200 (GDA). A 5-phospho-alpha-D-ribose 1-diphosphate-binding site is contributed by Asp199.

This sequence belongs to the UPRTase family. It depends on Mg(2+) as a cofactor.

It catalyses the reaction UMP + diphosphate = 5-phospho-alpha-D-ribose 1-diphosphate + uracil. It functions in the pathway pyrimidine metabolism; UMP biosynthesis via salvage pathway; UMP from uracil: step 1/1. With respect to regulation, allosterically activated by GTP. In terms of biological role, catalyzes the conversion of uracil and 5-phospho-alpha-D-ribose 1-diphosphate (PRPP) to UMP and diphosphate. The protein is Uracil phosphoribosyltransferase of Neisseria meningitidis serogroup A / serotype 4A (strain DSM 15465 / Z2491).